The chain runs to 356 residues: Peptide chain release factor 1 (356 aa).

Gln233 carries the N5-methylglutamine modification.

The protein belongs to the prokaryotic/mitochondrial release factor family. In terms of processing, methylated by PrmC. Methylation increases the termination efficiency of RF1.

Its subcellular location is the cytoplasm. Functionally, peptide chain release factor 1 directs the termination of translation in response to the peptide chain termination codons UAG and UAA. The polypeptide is Peptide chain release factor 1 (Oceanobacillus iheyensis (strain DSM 14371 / CIP 107618 / JCM 11309 / KCTC 3954 / HTE831)).